The chain runs to 132 residues: Bombinin-like peptides (132 aa).

The signal sequence occupies residues 1–18 (MNFKYIIAVSFLIASAYA). The propeptide occupies 19-42 (RSEEYDIQSLSQRDVLEEESLRKI). Phe68 carries the phenylalanine amide modification. Positions 72–112 (TAEDHEVMKRLEAAMRDLDSLDYPEEASERETRGFNQEEKE) are excised as a propeptide. The residue at position 131 (Leu131) is a Leucine amide.

This sequence belongs to the bombinin family. As to expression, expressed by the skin glands.

It localises to the secreted. Functionally, has antimicrobial activity against Gram-negative bacterium E.coli (MIC=26.3 uM), Gram-positive bacterium S.aureus (MIC=26.3 uM) and yeast C.albicans (MIC=52.5 uM). Has moderate hemolytic activity towards human erythrocytes at a concentration of 52.2 uM. In terms of biological role, has no antimicrobial activity at concentrations up to 161 uM. Has moderate hemolytic activity towards human erythrocytes at a concentration of 40.3 uM. The protein is Bombinin-like peptides of Bombina orientalis (Oriental fire-bellied toad).